The following is a 177-amino-acid chain: MLEKLIERVLFATRWLLAPLCIAMSLVLVVLGYAFMKELWHMLSHLDTISETDLVLSALGLVDLLFMAGLVLMVLLASYESFVSKLDKVDASEITWLKHTDFNALKLKVSLSIVAISAIFLLKRYMSLEDVLSSIPKDTPLSHNPIFWQVVINLVFVCSALLAAVTNNIAFSQNKAH.

Transmembrane regions (helical) follow at residues 15 to 35, 54 to 74, 102 to 122, and 145 to 165; these read WLLAPLCIAMSLVLVVLGYAF, LVLSALGLVDLLFMAGLVLMV, FNALKLKVSLSIVAISAIFLL, and PIFWQVVINLVFVCSALLAAV.

The protein belongs to the UPF0114 family.

It is found in the cell membrane. The sequence is that of UPF0114 protein HPP12_0190 from Helicobacter pylori (strain P12).